A 185-amino-acid chain; its full sequence is Gastrokine-1 (185 aa).

The signal sequence occupies residues 1-20 (MKFTIAFAGLLGVFLTPALA). Residues 54–150 (NNGWNSWNAL…MCKGIPTYMA (97 aa)) form the BRICHOS domain. A disulfide bond links cysteine 81 and cysteine 142.

The protein belongs to the gastrokine family. Highly expressed specifically in surface cells of the antrum mucosa from where it is secreted.

Its subcellular location is the secreted. The protein resides in the cytoplasmic granule. It localises to the golgi apparatus. Has mitogenic activity and may be involved in maintaining the integrity of the gastric mucosal epithelium. The protein is Gastrokine-1 (GKN1) of Sus scrofa (Pig).